Reading from the N-terminus, the 238-residue chain is Ribose-5-phosphate isomerase A (238 aa).

Residues 30–33 (SGST), 87–90 (DGAD), and 100–103 (KGGG) each bind substrate. The Proton acceptor role is filled by Glu109. Residue Lys127 participates in substrate binding.

The protein belongs to the ribose 5-phosphate isomerase family. Homodimer.

It catalyses the reaction aldehydo-D-ribose 5-phosphate = D-ribulose 5-phosphate. The protein operates within carbohydrate degradation; pentose phosphate pathway; D-ribose 5-phosphate from D-ribulose 5-phosphate (non-oxidative stage): step 1/1. Functionally, catalyzes the reversible conversion of ribose-5-phosphate to ribulose 5-phosphate. The sequence is that of Ribose-5-phosphate isomerase A from Synechococcus sp. (strain CC9311).